We begin with the raw amino-acid sequence, 691 residues long: DNA ligase (691 aa).

Residues 53–57, 102–103, and Glu-135 each bind NAD(+); these read DSEYD and SL. Lys-137 serves as the catalytic N6-AMP-lysine intermediate. Residues Arg-158, Glu-195, Lys-310, and Lys-334 each coordinate NAD(+). Zn(2+) contacts are provided by Cys-428, Cys-431, Cys-446, and Cys-452. One can recognise a BRCT domain in the interval 613–691; it reads SEGLPLDGQT…EEEFLVLVGE (79 aa).

This sequence belongs to the NAD-dependent DNA ligase family. LigA subfamily. It depends on Mg(2+) as a cofactor. The cofactor is Mn(2+).

It carries out the reaction NAD(+) + (deoxyribonucleotide)n-3'-hydroxyl + 5'-phospho-(deoxyribonucleotide)m = (deoxyribonucleotide)n+m + AMP + beta-nicotinamide D-nucleotide.. Its function is as follows. DNA ligase that catalyzes the formation of phosphodiester linkages between 5'-phosphoryl and 3'-hydroxyl groups in double-stranded DNA using NAD as a coenzyme and as the energy source for the reaction. It is essential for DNA replication and repair of damaged DNA. The polypeptide is DNA ligase (Psychrobacter cryohalolentis (strain ATCC BAA-1226 / DSM 17306 / VKM B-2378 / K5)).